The primary structure comprises 339 residues: Putative pectinesterase 10 (339 aa).

An N-terminal signal peptide occupies residues 1 to 28; the sequence is MKGVTIHNFCYSYFKVCLLVMSLAYGSA. A glycan (N-linked (GlcNAc...) asparagine) is linked at Asn112. Residue Thr116 participates in substrate binding. Catalysis depends on Asp169, which acts as the Proton donor. Asp190 functions as the Nucleophile in the catalytic mechanism. Substrate is bound by residues Arg252 and Trp254. Asn322 carries N-linked (GlcNAc...) asparagine glycosylation.

Belongs to the pectinesterase family. As to expression, expressed in siliques.

It localises to the secreted. Its subcellular location is the cell wall. It carries out the reaction [(1-&gt;4)-alpha-D-galacturonosyl methyl ester](n) + n H2O = [(1-&gt;4)-alpha-D-galacturonosyl](n) + n methanol + n H(+). Its pathway is glycan metabolism; pectin degradation; 2-dehydro-3-deoxy-D-gluconate from pectin: step 1/5. Acts in the modification of cell walls via demethylesterification of cell wall pectin. The polypeptide is Putative pectinesterase 10 (PME10) (Arabidopsis thaliana (Mouse-ear cress)).